Consider the following 355-residue polypeptide: Heat-inducible transcription repressor HrcA (355 aa).

Belongs to the HrcA family.

In terms of biological role, negative regulator of class I heat shock genes (grpE-dnaK-dnaJ and groELS operons). Prevents heat-shock induction of these operons. This chain is Heat-inducible transcription repressor HrcA, found in Prosthecochloris aestuarii (strain DSM 271 / SK 413).